The following is a 547-amino-acid chain: Chaperonin GroEL (547 aa).

ATP-binding positions include 30 to 33 (TLGP), Lys51, 87 to 91 (DGTTT), Gly415, and Asp495. Positions 526–547 (QDATPTASPDMGGMGGMGGGMM) are disordered. Residues 537–547 (GGMGGMGGGMM) show a composition bias toward gly residues.

Belongs to the chaperonin (HSP60) family. In terms of assembly, forms a cylinder of 14 subunits composed of two heptameric rings stacked back-to-back. Interacts with the co-chaperonin GroES.

The protein localises to the cytoplasm. It carries out the reaction ATP + H2O + a folded polypeptide = ADP + phosphate + an unfolded polypeptide.. Its function is as follows. Together with its co-chaperonin GroES, plays an essential role in assisting protein folding. The GroEL-GroES system forms a nano-cage that allows encapsulation of the non-native substrate proteins and provides a physical environment optimized to promote and accelerate protein folding. This is Chaperonin GroEL from Vesicomyosocius okutanii subsp. Calyptogena okutanii (strain HA).